The sequence spans 397 residues: Lysophospholipid transporter LplT (397 aa).

A run of 11 helical transmembrane segments spans residues S21–L41, I53–A73, L91–I111, L139–A159, L164–I184, W229–I249, Y257–V277, T281–L301, A304–V324, I344–L364, and V372–I392.

This sequence belongs to the major facilitator superfamily. LplT (TC 2.A.1.42) family.

Its subcellular location is the cell inner membrane. Its function is as follows. Catalyzes the facilitated diffusion of 2-acyl-glycero-3-phosphoethanolamine (2-acyl-GPE) into the cell. This is Lysophospholipid transporter LplT from Enterobacter sp. (strain 638).